A 118-amino-acid polypeptide reads, in one-letter code: ATP synthase subunit gamma, chloroplastic (118 aa).

Cys30 and Cys36 are joined by a disulfide.

This sequence belongs to the ATPase gamma chain family. F-type ATPases have 2 components, CF(1) - the catalytic core - and CF(0) - the membrane proton channel. CF(1) has five subunits: alpha(3), beta(3), gamma(1), delta(1), epsilon(1). CF(0) has four main subunits: a, b, b' and c.

It localises to the plastid. Its subcellular location is the chloroplast thylakoid membrane. Its function is as follows. Produces ATP from ADP in the presence of a proton gradient across the membrane. The gamma chain is believed to be important in regulating ATPase activity and the flow of protons through the CF(0) complex. Inceptin is a proteolytic fragment produced by insect larvae that previously ingested the protein. This peptide mediate plant perception of herbivory through the induction of volatile, phenylpropanoid and protease inhibitor defenses such as ethylene, jasmonic acid and salicylic acid for example. This Vigna unguiculata (Cowpea) protein is ATP synthase subunit gamma, chloroplastic.